Here is a 197-residue protein sequence, read N- to C-terminus: Probable GTP-binding protein EngB (197 aa).

An EngB-type G domain is found at 22-197 (TGVEVAFAGR…FKEKLDTWYQ (176 aa)). GTP is bound by residues 30–37 (GRSNAGKS), 57–61 (GRTQL), 75–78 (DLPG), 142–145 (TKAD), and 177–179 (FSS). Residues serine 37 and threonine 59 each contribute to the Mg(2+) site.

Belongs to the TRAFAC class TrmE-Era-EngA-EngB-Septin-like GTPase superfamily. EngB GTPase family. It depends on Mg(2+) as a cofactor.

Its function is as follows. Necessary for normal cell division and for the maintenance of normal septation. The sequence is that of Probable GTP-binding protein EngB from Francisella tularensis subsp. tularensis (strain FSC 198).